Here is a 342-residue protein sequence, read N- to C-terminus: Phosphate acyltransferase (342 aa).

It belongs to the PlsX family. Homodimer. Probably interacts with PlsY.

The protein localises to the cytoplasm. The catalysed reaction is a fatty acyl-[ACP] + phosphate = an acyl phosphate + holo-[ACP]. Its pathway is lipid metabolism; phospholipid metabolism. Its function is as follows. Catalyzes the reversible formation of acyl-phosphate (acyl-PO(4)) from acyl-[acyl-carrier-protein] (acyl-ACP). This enzyme utilizes acyl-ACP as fatty acyl donor, but not acyl-CoA. The sequence is that of Phosphate acyltransferase from Shewanella baltica (strain OS155 / ATCC BAA-1091).